The chain runs to 567 residues: Unguisins hydrolase ungD (567 aa).

This sequence belongs to the peptidase S12 family.

The protein operates within secondary metabolite biosynthesis. Hydrolase; part of the gene cluster that mediates the biosynthesis of the unguisins, gamma-aminobutyric acid (GABA)-containing fungal cyclic heptapeptides with the amino acid sequence cyclo-(D-Ala1-D-Val2-L-Phe3-D-Val4-D-Ala5-D-Trp6-GABA7) for unguisin A and cyclo-(D-Ala1-D-Val2-L-Leu3-D-Val4-D-Ala5-D-Trp6-GABA7) for unguisin B. Within the pathway, the hydrolase ungD catalyzes the hydrolysis between the D-tryptophan and GABA residues of unguisins A and B to produce the corresponding linear peptides. The alanine racemase ungC catalyzes the interconversion of L-alanine and D-alanine, providing the D-alanine which is accepted by the first adenylation domain of the nonribosomal peptide synthetase (NRPS) ungA. UngA is the main enzyme within the cluster which condenses the 7 residues using its respective 7 modules. The terminal condensation domain (Ct) is involved in cyclization with D-alanine and thereby releasing of unguisins A and B. In Aspergillus violaceofuscus (strain CBS 115571), this protein is Unguisins hydrolase ungD.